The primary structure comprises 80 residues: Cytochrome c oxidase subunit 7B, mitochondrial (80 aa).

Residues 1–24 constitute a mitochondrion transit peptide; the sequence is MFPLVKNALNRLQVRSIQQTMARQ. Residues 25–32 lie on the Mitochondrial matrix side of the membrane; that stretch reads SHQKRTPD. The chain crosses the membrane as a helical span at residues 33-59; it reads FHDKYGNAVLASGATFCIVTWTYVATQ. Residues 60-80 are Mitochondrial intermembrane-facing; it reads VGIEWNLSPVGRVTPKEWRNQ.

Belongs to the cytochrome c oxidase VIIb family. In terms of assembly, component of the cytochrome c oxidase (complex IV, CIV), a multisubunit enzyme composed of 14 subunits. The complex is composed of a catalytic core of 3 subunits MT-CO1, MT-CO2 and MT-CO3, encoded in the mitochondrial DNA, and 11 supernumerary subunits COX4I, COX5A, COX5B, COX6A, COX6B, COX6C, COX7A, COX7B, COX7C, COX8 and NDUFA4, which are encoded in the nuclear genome. The complex exists as a monomer or a dimer and forms supercomplexes (SCs) in the inner mitochondrial membrane with NADH-ubiquinone oxidoreductase (complex I, CI) and ubiquinol-cytochrome c oxidoreductase (cytochrome b-c1 complex, complex III, CIII), resulting in different assemblies (supercomplex SCI(1)III(2)IV(1) and megacomplex MCI(2)III(2)IV(2)).

The protein localises to the mitochondrion inner membrane. Its pathway is energy metabolism; oxidative phosphorylation. Component of the cytochrome c oxidase, the last enzyme in the mitochondrial electron transport chain which drives oxidative phosphorylation. The respiratory chain contains 3 multisubunit complexes succinate dehydrogenase (complex II, CII), ubiquinol-cytochrome c oxidoreductase (cytochrome b-c1 complex, complex III, CIII) and cytochrome c oxidase (complex IV, CIV), that cooperate to transfer electrons derived from NADH and succinate to molecular oxygen, creating an electrochemical gradient over the inner membrane that drives transmembrane transport and the ATP synthase. Cytochrome c oxidase is the component of the respiratory chain that catalyzes the reduction of oxygen to water. Electrons originating from reduced cytochrome c in the intermembrane space (IMS) are transferred via the dinuclear copper A center (CU(A)) of subunit 2 and heme A of subunit 1 to the active site in subunit 1, a binuclear center (BNC) formed by heme A3 and copper B (CU(B)). The BNC reduces molecular oxygen to 2 water molecules using 4 electrons from cytochrome c in the IMS and 4 protons from the mitochondrial matrix. Plays a role in proper central nervous system (CNS) development in vertebrates. This is Cytochrome c oxidase subunit 7B, mitochondrial (COX7B) from Pongo abelii (Sumatran orangutan).